Consider the following 459-residue polypeptide: Vanillin aminotransferase (459 aa).

Residues 115–116 (GS) and Asp-255 contribute to the pyridoxal 5'-phosphate site. Lys-284 is subject to N6-(pyridoxal phosphate)lysine. 320-321 (FT) is a binding site for pyridoxal 5'-phosphate. Positions 430 to 457 (LEELDELIRIYGKALKDTEKRVEELKSQ) form a coiled coil.

Belongs to the class-III pyridoxal-phosphate-dependent aminotransferase family. As to expression, confined to the placenta of green fruits at high levels. Barely detectable in the pericarp and seeds as well as in the placenta of mature fruits.

It carries out the reaction vanillin + L-alanine = vanillylamine + pyruvate. Its pathway is aromatic compound metabolism; phenylpropanoid biosynthesis. In terms of biological role, involved in the biosynthesis of capsaicinoids natural products, pungent alkaloids synthesized from phenylpropanoid intermediates in the placental tissue of chili pepper fruit acting as repellant on herbivorous mammals and conferring spiciness to hot peppers. Can transfer an amine from vanillylamine to pyruvate forming vanillin and L-alanine. This is Vanillin aminotransferase from Capsicum annuum (Capsicum pepper).